The sequence spans 439 residues: Dihydroorotate dehydrogenase (quinone), mitochondrial (439 aa).

Residues 1-22 (MMHRVGFNVIGRRSFFTVNARR) constitute a mitochondrion transit peptide. Residues 37–53 (LTALLLAGSAGYLYFMN) form a helical membrane-spanning segment. Residues 119 to 123 (AGLDK) and S143 contribute to the FMN site. K123 contacts substrate. 168 to 172 (NRYGF) is a substrate binding site. Residues N215 and N245 each coordinate FMN. A substrate-binding site is contributed by 245–250 (NVSSPN). The Nucleophile role is filled by S248. FMN-binding residues include K296 and S324. 325–326 (NT) contacts substrate. FMN contacts are provided by residues G350, G380, and 401 to 402 (YT).

This sequence belongs to the dihydroorotate dehydrogenase family. Type 2 subfamily. The cofactor is FMN.

It is found in the mitochondrion inner membrane. It carries out the reaction (S)-dihydroorotate + a quinone = orotate + a quinol. It functions in the pathway pyrimidine metabolism; UMP biosynthesis via de novo pathway; orotate from (S)-dihydroorotate (quinone route): step 1/1. Catalyzes the conversion of dihydroorotate to orotate with quinone as electron acceptor. The polypeptide is Dihydroorotate dehydrogenase (quinone), mitochondrial (URA9) (Candida glabrata (strain ATCC 2001 / BCRC 20586 / JCM 3761 / NBRC 0622 / NRRL Y-65 / CBS 138) (Yeast)).